The primary structure comprises 194 residues: NADH-quinone oxidoreductase subunit B (194 aa).

A compositionally biased stretch (pro residues) spans 1–11 (MGVIATPPPSV). The tract at residues 1–24 (MGVIATPPPSVQGPSSQVPSSAPI) is disordered. Over residues 12 to 21 (QGPSSQVPSS) the composition is skewed to low complexity. [4Fe-4S] cluster-binding residues include C72, C73, C137, and C167.

This sequence belongs to the complex I 20 kDa subunit family. NDH-1 is composed of 14 different subunits. Subunits NuoB, C, D, E, F, and G constitute the peripheral sector of the complex. [4Fe-4S] cluster is required as a cofactor.

The protein resides in the cell inner membrane. The catalysed reaction is a quinone + NADH + 5 H(+)(in) = a quinol + NAD(+) + 4 H(+)(out). NDH-1 shuttles electrons from NADH, via FMN and iron-sulfur (Fe-S) centers, to quinones in the respiratory chain. The immediate electron acceptor for the enzyme in this species is believed to be ubiquinone. Couples the redox reaction to proton translocation (for every two electrons transferred, four hydrogen ions are translocated across the cytoplasmic membrane), and thus conserves the redox energy in a proton gradient. The polypeptide is NADH-quinone oxidoreductase subunit B (Rhodospirillum centenum (strain ATCC 51521 / SW)).